A 548-amino-acid chain; its full sequence is MPTINVKKADLERLVNMPLEDEFIEEKFPMMGVEVEGIFEEDGEKIIQFSINPNRPDYLSAEGLARGFRGIIGIETGLKKYDIESSDVKLYVENVETRPYIAMALVKGVIVDDYVLESIINLQEKLHWVMGRDRKKVAIGIHDADKVKPPFYYKEVSGDGIKFVPLNSDEEMTPREILEKHEKGIKYAHLIKDDKFPIILDSEGDVLSMPPIINGELTRVTTETRNLLIDVTGTDKYAVEKTLNIIVTALAERKYGKIHAVEVIKDNQSTIYPNLKEDVLETTSEYINKVLGANLTPGTIINYLRRCRLDAQFVDNKIKVFIPAYRVDIFGEIDIAEEVAIAYGYNKFSGEYPIIGTIGELNQLEKKCDFIREIMVGFGFYEVINLMLSNDEVLFKKMRIEDNNYIEVLKPASIEHRIVRKSILPLLMETLRINKHKELPQKIFEIGDCVVIDENAETKSRVVKKIAGVIVDNETNFNEIKSYVEGLLRELKIEYELDNFEHPSFIKGRCAKILKDGKIIGYFGEIHPEVITNFELEFPVVGFELEIE.

Residues 275–350 (LKEDVLETTS…IAYGYNKFSG (76 aa)) enclose the B5 domain. The Mg(2+) site is built by aspartate 328, aspartate 334, glutamate 337, and glutamate 338.

It belongs to the phenylalanyl-tRNA synthetase beta subunit family. Type 2 subfamily. Tetramer of two alpha and two beta subunits. Mg(2+) is required as a cofactor.

Its subcellular location is the cytoplasm. The catalysed reaction is tRNA(Phe) + L-phenylalanine + ATP = L-phenylalanyl-tRNA(Phe) + AMP + diphosphate + H(+). This Methanocaldococcus jannaschii (strain ATCC 43067 / DSM 2661 / JAL-1 / JCM 10045 / NBRC 100440) (Methanococcus jannaschii) protein is Phenylalanine--tRNA ligase beta subunit.